A 169-amino-acid polypeptide reads, in one-letter code: S-ribosylhomocysteine lyase (169 aa).

Fe cation-binding residues include H54, H58, and C128.

The protein belongs to the LuxS family. Homodimer. Fe cation serves as cofactor.

The enzyme catalyses S-(5-deoxy-D-ribos-5-yl)-L-homocysteine = (S)-4,5-dihydroxypentane-2,3-dione + L-homocysteine. Functionally, involved in the synthesis of autoinducer 2 (AI-2) which is secreted by bacteria and is used to communicate both the cell density and the metabolic potential of the environment. The regulation of gene expression in response to changes in cell density is called quorum sensing. Catalyzes the transformation of S-ribosylhomocysteine (RHC) to homocysteine (HC) and 4,5-dihydroxy-2,3-pentadione (DPD). The sequence is that of S-ribosylhomocysteine lyase from Shewanella frigidimarina (strain NCIMB 400).